Consider the following 115-residue polypeptide: uncharacterized protein (115 aa).

It belongs to the transposase 34 family.

This is an uncharacterized protein from Sinorhizobium fredii (strain NBRC 101917 / NGR234).